The chain runs to 238 residues: Transcription termination/antitermination protein NusG (238 aa).

This sequence belongs to the NusG family.

Functionally, participates in transcription elongation, termination and antitermination. The polypeptide is Transcription termination/antitermination protein NusG (Mycobacterium tuberculosis (strain CDC 1551 / Oshkosh)).